We begin with the raw amino-acid sequence, 379 residues long: Succinyl-diaminopimelate desuccinylase (379 aa).

His-70 contacts Zn(2+). The active site involves Asp-72. Residue Asp-103 participates in Zn(2+) binding. Glu-137 functions as the Proton acceptor in the catalytic mechanism. Zn(2+) contacts are provided by Glu-138, Glu-166, and His-352.

The protein belongs to the peptidase M20A family. DapE subfamily. Homodimer. The cofactor is Zn(2+). It depends on Co(2+) as a cofactor.

It catalyses the reaction N-succinyl-(2S,6S)-2,6-diaminopimelate + H2O = (2S,6S)-2,6-diaminopimelate + succinate. Its pathway is amino-acid biosynthesis; L-lysine biosynthesis via DAP pathway; LL-2,6-diaminopimelate from (S)-tetrahydrodipicolinate (succinylase route): step 3/3. Functionally, catalyzes the hydrolysis of N-succinyl-L,L-diaminopimelic acid (SDAP), forming succinate and LL-2,6-diaminopimelate (DAP), an intermediate involved in the bacterial biosynthesis of lysine and meso-diaminopimelic acid, an essential component of bacterial cell walls. This chain is Succinyl-diaminopimelate desuccinylase, found in Burkholderia ambifaria (strain MC40-6).